The primary structure comprises 284 residues: Protease HtpX (284 aa).

The next 2 helical transmembrane spans lie at Ile-4 to Leu-24 and Met-33 to Met-53. A Zn(2+)-binding site is contributed by His-139. Glu-140 is an active-site residue. Residue His-143 participates in Zn(2+) binding. The next 2 membrane-spanning stretches (helical) occupy residues Gly-147–Ala-167 and Ile-187–Ala-207. Residue Glu-215 coordinates Zn(2+).

Belongs to the peptidase M48B family. It depends on Zn(2+) as a cofactor.

Its subcellular location is the cell inner membrane. The sequence is that of Protease HtpX from Mannheimia succiniciproducens (strain KCTC 0769BP / MBEL55E).